Consider the following 315-residue polypeptide: Deoxyribonuclease-1-like 1 (315 aa).

A signal peptide spans 1–29 (MDSSGGFQKHTCGHALLLLLLLLAGGAEA). Catalysis depends on residues E108 and H159. C198 and C235 are oxidised to a cystine. A glycan (N-linked (GlcNAc...) asparagine) is linked at N272.

This sequence belongs to the DNase I family.

The protein resides in the endoplasmic reticulum. This chain is Deoxyribonuclease-1-like 1 (DNASE1L1), found in Sus scrofa (Pig).